Reading from the N-terminus, the 122-residue chain is Large ribosomal subunit protein uL14 (122 aa).

This sequence belongs to the universal ribosomal protein uL14 family. As to quaternary structure, part of the 50S ribosomal subunit. Forms a cluster with proteins L3 and L19. In the 70S ribosome, L14 and L19 interact and together make contacts with the 16S rRNA in bridges B5 and B8.

Binds to 23S rRNA. Forms part of two intersubunit bridges in the 70S ribosome. The protein is Large ribosomal subunit protein uL14 of Clostridium tetani (strain Massachusetts / E88).